Consider the following 59-residue polypeptide: MFTVFLLVVLATTVVSFSTDDESDGSNEEPSADQAARSAMNRPPGCCNNPACVKHRCGG.

An N-terminal signal peptide occupies residues 1–16 (MFTVFLLVVLATTVVS). The propeptide occupies 17–42 (FSTDDESDGSNEEPSADQAARSAMNR). The tract at residues 18–43 (STDDESDGSNEEPSADQAARSAMNRP) is disordered. A compositionally biased stretch (acidic residues) spans 19-31 (TDDESDGSNEEPS). Cystine bridges form between cysteine 46–cysteine 52 and cysteine 47–cysteine 57. Glycine amide is present on glycine 58.

The protein belongs to the conotoxin A superfamily. Expressed by the venom duct.

Its subcellular location is the secreted. This is Conotoxin Bu1.2 from Conus bullatus (Bubble cone).